A 342-amino-acid polypeptide reads, in one-letter code: Glycerol-3-phosphate dehydrogenase [NAD(P)+] (342 aa).

W11, R33, and K107 together coordinate NADPH. Sn-glycerol 3-phosphate contacts are provided by K107, G143, and S145. Position 147 (A147) interacts with NADPH. Sn-glycerol 3-phosphate contacts are provided by K198, D251, S261, R262, and N263. Catalysis depends on K198, which acts as the Proton acceptor. NADPH is bound at residue R262. V286 and E288 together coordinate NADPH.

Belongs to the NAD-dependent glycerol-3-phosphate dehydrogenase family.

Its subcellular location is the cytoplasm. It carries out the reaction sn-glycerol 3-phosphate + NAD(+) = dihydroxyacetone phosphate + NADH + H(+). The catalysed reaction is sn-glycerol 3-phosphate + NADP(+) = dihydroxyacetone phosphate + NADPH + H(+). It participates in membrane lipid metabolism; glycerophospholipid metabolism. Its function is as follows. Catalyzes the reduction of the glycolytic intermediate dihydroxyacetone phosphate (DHAP) to sn-glycerol 3-phosphate (G3P), the key precursor for phospholipid synthesis. This is Glycerol-3-phosphate dehydrogenase [NAD(P)+] from Paracidovorax citrulli (strain AAC00-1) (Acidovorax citrulli).